Consider the following 305-residue polypeptide: Phosphatidylinositol:ceramide inositolphosphotransferase 2 (305 aa).

6 consecutive transmembrane segments (helical) span residues 34-54 (LLAG…VHYI), 81-101 (ETVF…PFIL), 105-125 (KIYT…CQFL), 168-188 (VMYG…LVFV), 198-218 (RFIK…IIAS), and 221-241 (HYSV…FCLD). Residue histidine 180 is part of the active site. Catalysis depends on residues histidine 221 and aspartate 225.

The protein belongs to the sphingomyelin synthase family. Expressed in leaves, roots, stems, flowers and siliques.

It is found in the golgi apparatus. It localises to the trans-Golgi network membrane. The catalysed reaction is an N-(2R-hydroxy-very-long-chain fatty acyl)-(R)-4-hydroxysphingoid base + a 1,2-diacyl-sn-glycero-3-phospho-(1D-myo-inositol) = a 1D-myo-inositol-1-phospho-N-[(R)-2-hydroxy-very-long-chain fatty acyl]-(R)-4-hydroxysphingoid base + a 1,2-diacyl-sn-glycerol. Its pathway is sphingolipid metabolism. Functionally, catalyzes the transfer of the phosphorylinositol group from phosphatidylinositol (PI) to phytoceramide, an essential step in sphingolipid biosynthesis. May play an important role in modulating plant programmed cell death (PCD) associated with defense (e.g. toward Golovinomyces cichoracearum) by promoting sphingolipid metabolism and thus regulating ceramide accumulation. The chain is Phosphatidylinositol:ceramide inositolphosphotransferase 2 from Arabidopsis thaliana (Mouse-ear cress).